The primary structure comprises 451 residues: Glucose-6-phosphate isomerase (451 aa).

At Thr-38 the chain carries Phosphothreonine. The Proton donor role is filled by Glu-290. Residues His-311 and Lys-425 contribute to the active site.

Belongs to the GPI family.

Its subcellular location is the cytoplasm. The enzyme catalyses alpha-D-glucose 6-phosphate = beta-D-fructose 6-phosphate. Its pathway is carbohydrate biosynthesis; gluconeogenesis. The protein operates within carbohydrate degradation; glycolysis; D-glyceraldehyde 3-phosphate and glycerone phosphate from D-glucose: step 2/4. In terms of biological role, catalyzes the reversible isomerization of glucose-6-phosphate to fructose-6-phosphate. The chain is Glucose-6-phosphate isomerase from Shouchella clausii (strain KSM-K16) (Alkalihalobacillus clausii).